We begin with the raw amino-acid sequence, 443 residues long: sn-2 acyl-lipid omega-3 desaturase (ferredoxin), chloroplastic (443 aa).

The N-terminal 51 residues, 1-51 (MAGLVLSGCAIKPFSQSLPIPTKRFITNPSNINLLHPKDPIFSPNFHGFSR), are a transit peptide targeting the chloroplast. The next 2 membrane-spanning stretches (helical) occupy residues 120–140 (MSYV…AAHL) and 143–163 (WLVW…LFVL). The Histidine box-1 signature appears at 165–169 (HDCGH). The Histidine box-2 motif lies at 201-205 (HRTHH). The next 2 helical transmembrane spans lie at 281–301 (TICW…VGPV) and 304–324 (LKLY…VTYL). A Histidine box-3 motif is present at residues 368-372 (HVIHH).

The protein belongs to the fatty acid desaturase type 1 family. Highly expressed in leaves and cotyledons, while no or little expression detected in mature seeds, roots and stems.

It is found in the plastid. The protein localises to the chloroplast membrane. The enzyme catalyses a (7Z,10Z)-hexadecadienoyl-containing glycerolipid + 2 reduced [2Fe-2S]-[ferredoxin] + O2 + 2 H(+) = a (7Z,10Z,13Z)-hexadecatrienoyl-containing glycerolipid + 2 oxidized [2Fe-2S]-[ferredoxin] + 2 H2O. The catalysed reaction is a (9Z,12Z)-octadecadienoyl-containing glycerolipid + 2 reduced [2Fe-2S]-[ferredoxin] + O2 + 2 H(+) = (9Z,12Z,15Z)-octadecatrienoyl-containing glycerolipid + 2 oxidized [2Fe-2S]-[ferredoxin] + 2 H2O. It functions in the pathway lipid metabolism; polyunsaturated fatty acid biosynthesis. Chloroplast omega-3 fatty acid desaturase introduces the third double bond in the biosynthesis of 18:3, and probably also 16:3 fatty acids, important constituents of plant membranes. It is thought to use ferredoxin as an electron donor and to act on fatty acids esterified to galactolipids, sulfolipids and phosphatidylglycerol. The chain is sn-2 acyl-lipid omega-3 desaturase (ferredoxin), chloroplastic from Helianthus annuus (Common sunflower).